A 159-amino-acid chain; its full sequence is 2-C-methyl-D-erythritol 2,4-cyclodiphosphate synthase (159 aa).

A divalent metal cation contacts are provided by D8 and H10. 4-CDP-2-C-methyl-D-erythritol 2-phosphate is bound by residues 8–10 (DVH) and 34–35 (HS). A divalent metal cation is bound at residue H42. Residues 56–58 (DIG), 61–65 (FPDTD), 100–106 (AQAPKML), 132–135 (TTTE), F139, and R142 each bind 4-CDP-2-C-methyl-D-erythritol 2-phosphate.

This sequence belongs to the IspF family. As to quaternary structure, homotrimer. A divalent metal cation is required as a cofactor.

The enzyme catalyses 4-CDP-2-C-methyl-D-erythritol 2-phosphate = 2-C-methyl-D-erythritol 2,4-cyclic diphosphate + CMP. The protein operates within isoprenoid biosynthesis; isopentenyl diphosphate biosynthesis via DXP pathway; isopentenyl diphosphate from 1-deoxy-D-xylulose 5-phosphate: step 4/6. In terms of biological role, involved in the biosynthesis of isopentenyl diphosphate (IPP) and dimethylallyl diphosphate (DMAPP), two major building blocks of isoprenoid compounds. Catalyzes the conversion of 4-diphosphocytidyl-2-C-methyl-D-erythritol 2-phosphate (CDP-ME2P) to 2-C-methyl-D-erythritol 2,4-cyclodiphosphate (ME-CPP) with a corresponding release of cytidine 5-monophosphate (CMP). This Salmonella typhimurium (strain LT2 / SGSC1412 / ATCC 700720) protein is 2-C-methyl-D-erythritol 2,4-cyclodiphosphate synthase.